The chain runs to 342 residues: Cytochrome c oxidase subunit 2 (342 aa).

Residues 1–22 form the signal peptide; that stretch reads MKLWKTASRFLPLSFLTLFLTG. Cysteine 23 carries the N-palmitoyl cysteine lipid modification. Cysteine 23 carries S-diacylglycerol cysteine lipidation. Topologically, residues 23–50 are extracellular; sequence CLGEENLTALDPKGPQAQWIYDNMILSI. The cytochrome c oxidase subunit II stretch occupies residues 23–249; sequence CLGEENLTAL…MSAEVEEPTE (227 aa). Residues 51–69 form a helical membrane-spanning segment; sequence IVMALVSIVVFAIFFIILA. The Cytoplasmic portion of the chain corresponds to 70 to 89; the sequence is KYRRKPGDDEIPKQVHGNTA. The helical transmembrane segment at 90–108 threads the bilayer; the sequence is LEITWTVIPIILLVILAVP. Over 109 to 342 the chain is Extracellular; that stretch reads TITGTFMFAD…AYLRSLKVME (234 aa). Histidine 175, cysteine 210, cysteine 214, and histidine 218 together coordinate Cu cation. Residues 250 to 342 form the Cytochrome c domain; the sequence is TLANQGRQVF…AYLRSLKVME (93 aa). Heme c-binding residues include cysteine 264, cysteine 267, histidine 268, and methionine 317.

It belongs to the cytochrome c oxidase subunit 2 family. Cu cation serves as cofactor. Heme c is required as a cofactor.

The protein resides in the cell membrane. It carries out the reaction 4 Fe(II)-[cytochrome c] + O2 + 8 H(+)(in) = 4 Fe(III)-[cytochrome c] + 2 H2O + 4 H(+)(out). Functionally, subunits I and II form the functional core of the enzyme complex. Electrons originating in cytochrome c are transferred via heme a and Cu(A) to the binuclear center formed by heme a3 and Cu(B). The sequence is that of Cytochrome c oxidase subunit 2 (ctaC) from Alkalihalophilus pseudofirmus (strain ATCC BAA-2126 / JCM 17055 / OF4) (Bacillus pseudofirmus).